We begin with the raw amino-acid sequence, 125 residues long: MKTARLQVTLRCAVDLINSSSDQCFARIEHVASDQADPRPGVWHSSGMNRIRLSTTVDAALLTSARDMRAGITDAALIDEALAALLARHRSAEVDASYAAYDKHPVDEPDEWGDLASWRRAAGDS.

Forms a complex with cognate toxin MazF5.

Functionally, antitoxin component of a type II toxin-antitoxin (TA) system. Upon expression in M.smegmatis neutralizes the effect of cognate toxin MazF5. The protein is Antitoxin MazE5 (mazE5) of Mycobacterium tuberculosis (strain ATCC 25618 / H37Rv).